A 431-amino-acid polypeptide reads, in one-letter code: Probable oxidoreductase OrdL (431 aa).

The protein is Probable oxidoreductase OrdL (ordL) of Haemophilus influenzae (strain ATCC 51907 / DSM 11121 / KW20 / Rd).